The chain runs to 140 residues: PDZ domain-containing protein 11 (140 aa).

The region spanning 47-129 (TITLKKPPGA…ISMRVRFFPY (83 aa)) is the PDZ domain.

In terms of assembly, interacts with ATP2B1, ATP2B2, ATP2B3, ATP2B4 and ATP7A. Interacts with PLEKHA7 (via WW domains) at zonula adherens; this interaction is essential for the interaction between PLEKHA7 and the ADAM10-binding protein TSPAN33. Interacts with SLC5A6. In terms of tissue distribution, widely expressed (at protein level).

It localises to the secreted. It is found in the cytoplasm. The protein resides in the cell junction. The protein localises to the adherens junction. Its subcellular location is the cell membrane. Functionally, mediates docking of ADAM10 to zonula adherens by interacting with PLEKHA7 which is required for PLEKHA7 to interact with the ADAM10-binding protein TSPAN33. The chain is PDZ domain-containing protein 11 (PDZD11) from Homo sapiens (Human).